Reading from the N-terminus, the 299-residue chain is MSREKPKSFQSLILTLHDYWSRQGCVILQPHDVEVGAGTLHPATVLRALGPKAWNAAYVQPSRRPGDGRYGENPNRLQHYYQYQVILKPNPENMQDLYLGSLEAIGLDLRTHDIRFVEDDWENPTVGAWGLGWEVWCDGMEVSQYTYFQQVGGLDVNPVAGELTYGLERLAMYVFGVDNVYDLPFNDPDSPLGATTYGDVFLENERQQSEANFHGFDVAVLKQQFEQMEEQVPLMLARSYQDKALVLPAYDMVLKASHLFNLMNARGAIAVAERASYIGRIRDLCKMCASAWVEQQEAA.

The protein belongs to the class-II aminoacyl-tRNA synthetase family. As to quaternary structure, tetramer of two alpha and two beta subunits.

Its subcellular location is the cytoplasm. The enzyme catalyses tRNA(Gly) + glycine + ATP = glycyl-tRNA(Gly) + AMP + diphosphate. This chain is Glycine--tRNA ligase alpha subunit, found in Caulobacter vibrioides (strain ATCC 19089 / CIP 103742 / CB 15) (Caulobacter crescentus).